The primary structure comprises 230 residues: Ribonuclease 3 (230 aa).

An RNase III domain is found at 7–134 (LEELESKLGI…VIAAIYLDKG (128 aa)). Glu-47 contributes to the Mg(2+) binding site. The active site involves Asp-51. Mg(2+)-binding residues include Asp-120 and Glu-123. Glu-123 is an active-site residue. The DRBM domain occupies 161 to 230 (DYKTRLQEIL…ACKALKGLDN (70 aa)).

It belongs to the ribonuclease III family. As to quaternary structure, homodimer. The cofactor is Mg(2+).

It localises to the cytoplasm. It catalyses the reaction Endonucleolytic cleavage to 5'-phosphomonoester.. Digests double-stranded RNA. Involved in the processing of primary rRNA transcript to yield the immediate precursors to the large and small rRNAs (23S and 16S). Processes some mRNAs, and tRNAs when they are encoded in the rRNA operon. Processes pre-crRNA and tracrRNA of type II CRISPR loci if present in the organism. This is Ribonuclease 3 from Clostridium acetobutylicum (strain ATCC 824 / DSM 792 / JCM 1419 / IAM 19013 / LMG 5710 / NBRC 13948 / NRRL B-527 / VKM B-1787 / 2291 / W).